We begin with the raw amino-acid sequence, 351 residues long: Minor outer capsid protein P9 (351 aa).

The interval 246-308 is disordered; sequence GVPAALPQPD…KAVPSGNVSA (63 aa). Positions 285–297 are enriched in basic and acidic residues; that stretch reads MIRKKVETSKDAP.

Belongs to the phytoreovirus minor outer capsid protein P9 family.

The protein resides in the virion. The protein localises to the host cytoplasm. In terms of biological role, minor outer capsid protein. The sequence is that of Minor outer capsid protein P9 from Rice dwarf virus (isolate O) (RDV).